The chain runs to 225 residues: NAD(P)H-quinone oxidoreductase subunit K, chloroplastic (225 aa).

Residues Cys43, Cys44, Cys108, and Cys139 each coordinate [4Fe-4S] cluster.

Belongs to the complex I 20 kDa subunit family. As to quaternary structure, NDH is composed of at least 16 different subunits, 5 of which are encoded in the nucleus. [4Fe-4S] cluster is required as a cofactor.

The protein resides in the plastid. Its subcellular location is the chloroplast thylakoid membrane. The catalysed reaction is a plastoquinone + NADH + (n+1) H(+)(in) = a plastoquinol + NAD(+) + n H(+)(out). It carries out the reaction a plastoquinone + NADPH + (n+1) H(+)(in) = a plastoquinol + NADP(+) + n H(+)(out). Functionally, NDH shuttles electrons from NAD(P)H:plastoquinone, via FMN and iron-sulfur (Fe-S) centers, to quinones in the photosynthetic chain and possibly in a chloroplast respiratory chain. The immediate electron acceptor for the enzyme in this species is believed to be plastoquinone. Couples the redox reaction to proton translocation, and thus conserves the redox energy in a proton gradient. The sequence is that of NAD(P)H-quinone oxidoreductase subunit K, chloroplastic from Hordeum vulgare (Barley).